The chain runs to 165 residues: 2-C-methyl-D-erythritol 2,4-cyclodiphosphate synthase (165 aa).

A divalent metal cation is bound by residues D8 and H10. Residues 8 to 10 (DVH) and 34 to 35 (HS) each bind 4-CDP-2-C-methyl-D-erythritol 2-phosphate. H42 is a binding site for a divalent metal cation. 4-CDP-2-C-methyl-D-erythritol 2-phosphate-binding positions include 56 to 58 (DIG), 61 to 65 (FPDTD), 132 to 135 (TTTE), F139, and R142.

The protein belongs to the IspF family. Homotrimer. A divalent metal cation is required as a cofactor.

It carries out the reaction 4-CDP-2-C-methyl-D-erythritol 2-phosphate = 2-C-methyl-D-erythritol 2,4-cyclic diphosphate + CMP. Its pathway is isoprenoid biosynthesis; isopentenyl diphosphate biosynthesis via DXP pathway; isopentenyl diphosphate from 1-deoxy-D-xylulose 5-phosphate: step 4/6. Involved in the biosynthesis of isopentenyl diphosphate (IPP) and dimethylallyl diphosphate (DMAPP), two major building blocks of isoprenoid compounds. Catalyzes the conversion of 4-diphosphocytidyl-2-C-methyl-D-erythritol 2-phosphate (CDP-ME2P) to 2-C-methyl-D-erythritol 2,4-cyclodiphosphate (ME-CPP) with a corresponding release of cytidine 5-monophosphate (CMP). This is 2-C-methyl-D-erythritol 2,4-cyclodiphosphate synthase from Halothermothrix orenii (strain H 168 / OCM 544 / DSM 9562).